Consider the following 254-residue polypeptide: Thiazole synthase (254 aa).

The active-site Schiff-base intermediate with DXP is Lys95. 1-deoxy-D-xylulose 5-phosphate is bound by residues Gly156, 182-183 (AG), and 204-205 (NT).

Belongs to the ThiG family. In terms of assembly, homotetramer. Forms heterodimers with either ThiH or ThiS.

Its subcellular location is the cytoplasm. The enzyme catalyses [ThiS sulfur-carrier protein]-C-terminal-Gly-aminoethanethioate + 2-iminoacetate + 1-deoxy-D-xylulose 5-phosphate = [ThiS sulfur-carrier protein]-C-terminal Gly-Gly + 2-[(2R,5Z)-2-carboxy-4-methylthiazol-5(2H)-ylidene]ethyl phosphate + 2 H2O + H(+). It functions in the pathway cofactor biosynthesis; thiamine diphosphate biosynthesis. Catalyzes the rearrangement of 1-deoxy-D-xylulose 5-phosphate (DXP) to produce the thiazole phosphate moiety of thiamine. Sulfur is provided by the thiocarboxylate moiety of the carrier protein ThiS. In vitro, sulfur can be provided by H(2)S. In Shewanella sp. (strain MR-7), this protein is Thiazole synthase.